We begin with the raw amino-acid sequence, 425 residues long: Serine hydroxymethyltransferase (425 aa).

(6S)-5,6,7,8-tetrahydrofolate-binding positions include Leu124 and 128 to 130 (GHL). Lys233 carries the post-translational modification N6-(pyridoxal phosphate)lysine.

This sequence belongs to the SHMT family. Homodimer. Pyridoxal 5'-phosphate is required as a cofactor.

It is found in the cytoplasm. It catalyses the reaction (6R)-5,10-methylene-5,6,7,8-tetrahydrofolate + glycine + H2O = (6S)-5,6,7,8-tetrahydrofolate + L-serine. It participates in one-carbon metabolism; tetrahydrofolate interconversion. It functions in the pathway amino-acid biosynthesis; glycine biosynthesis; glycine from L-serine: step 1/1. In terms of biological role, catalyzes the reversible interconversion of serine and glycine with tetrahydrofolate (THF) serving as the one-carbon carrier. This reaction serves as the major source of one-carbon groups required for the biosynthesis of purines, thymidylate, methionine, and other important biomolecules. Also exhibits THF-independent aldolase activity toward beta-hydroxyamino acids, producing glycine and aldehydes, via a retro-aldol mechanism. The chain is Serine hydroxymethyltransferase from Clavibacter sepedonicus (Clavibacter michiganensis subsp. sepedonicus).